We begin with the raw amino-acid sequence, 133 residues long: Holo-[acyl-carrier-protein] synthase (133 aa).

Residues D8 and E56 each coordinate Mg(2+).

Belongs to the P-Pant transferase superfamily. AcpS family. It depends on Mg(2+) as a cofactor.

It is found in the cytoplasm. It carries out the reaction apo-[ACP] + CoA = holo-[ACP] + adenosine 3',5'-bisphosphate + H(+). Transfers the 4'-phosphopantetheine moiety from coenzyme A to a Ser of acyl-carrier-protein. This chain is Holo-[acyl-carrier-protein] synthase, found in Deinococcus radiodurans (strain ATCC 13939 / DSM 20539 / JCM 16871 / CCUG 27074 / LMG 4051 / NBRC 15346 / NCIMB 9279 / VKM B-1422 / R1).